We begin with the raw amino-acid sequence, 73 residues long: Ocellatin-PT8 (73 aa).

An N-terminal signal peptide occupies residues 1–22; the sequence is MAFLKKSLFLVLFLGLVSLSIC. Residues 23-39 constitute a propeptide that is removed on maturation; that stretch reads DEEKRQDEDDDDDDDEE.

Expressed by the skin glands.

The protein localises to the secreted. Its function is as follows. Has antibacterial activity against Gram-negative bacteria E.coli ATCC 25922 (MIC=60 uM), K.pneumoniae ATCC 700603 (MIC=240 uM) and S.choleraesuis ATCC 14028 (MIC=240 uM) and against Gram-positive bacterium S.aureus ATCC 29313 (MIC=240 uM). Shows no hemolytic activity and no cytotoxicity. The protein is Ocellatin-PT8 of Leptodactylus pustulatus (Ceara white-lipped frog).